Reading from the N-terminus, the 450-residue chain is Asparagine--tRNA ligase (450 aa).

Belongs to the class-II aminoacyl-tRNA synthetase family. Homodimer.

It localises to the cytoplasm. It catalyses the reaction tRNA(Asn) + L-asparagine + ATP = L-asparaginyl-tRNA(Asn) + AMP + diphosphate + H(+). This is Asparagine--tRNA ligase from Mycoplasmopsis pulmonis (strain UAB CTIP) (Mycoplasma pulmonis).